Consider the following 216-residue polypeptide: MDNPQKFSNSKEVINFLSESFPACFSVTGDAKPLKIGIFQDLAQRLEEEERVSKTLLRSSLRHYTNSWRYLHSVKEGAFRVDLDGQQAAPIEKEHADHAQAQLEESKAKVAEKRKAQNAAKPGAKKSYKSKTVPAFKSSPKGTNQDNVKPKAKLPPPEKLSAEQLVAGTSVTVKIGKSPMPATITDVSKDGVQVQLDTGMVVKVQVDNLRLARSKR.

Residues 105–115 (ESKAKVAEKRK) are compositionally biased toward basic and acidic residues. Residues 105-159 (ESKAKVAEKRKAQNAAKPGAKKSYKSKTVPAFKSSPKGTNQDNVKPKAKLPPPEK) are disordered.

Belongs to the ProQ family.

It is found in the cytoplasm. Functionally, RNA chaperone with significant RNA binding, RNA strand exchange and RNA duplexing activities. The polypeptide is RNA chaperone ProQ (Pseudoalteromonas atlantica (strain T6c / ATCC BAA-1087)).